A 367-amino-acid chain; its full sequence is Dual specificity protein phosphatase 1 (367 aa).

The 118-residue stretch at 20 to 137 folds into the Rhodanese domain; the sequence is RAAQCLLLDC…FSASCPELCS (118 aa). The 142-residue stretch at 173–314 folds into the Tyrosine-protein phosphatase domain; the sequence is GPVEILPFLY…LLQFESQVLA (142 aa). C258 (phosphocysteine intermediate) is an active-site residue. S359 and S364 each carry phosphoserine; by MAPK1 and MAPK3.

Belongs to the protein-tyrosine phosphatase family. Non-receptor class dual specificity subfamily. In terms of processing, phosphorylation at Ser-359 and Ser-364 by MAPK1/ERK2 and MAPK3/ERK1 reduces its rate of degradation. 'Lys-48'-linked polyubiquitinated by NEURL3, leading to proteasomal degradation. As to expression, expressed at high levels in the lung, liver placenta and pancreas. Moderate levels seen in the heart and skeletal muscle. Lower levels found in the brain and kidney.

It localises to the nucleus. It catalyses the reaction O-phospho-L-tyrosyl-[protein] + H2O = L-tyrosyl-[protein] + phosphate. The catalysed reaction is O-phospho-L-seryl-[protein] + H2O = L-seryl-[protein] + phosphate. It carries out the reaction O-phospho-L-threonyl-[protein] + H2O = L-threonyl-[protein] + phosphate. Dual specificity phosphatase that dephosphorylates MAP kinase MAPK1/ERK2 on both 'Thr-183' and 'Tyr-185', regulating its activity during the meiotic cell cycle. This is Dual specificity protein phosphatase 1 from Homo sapiens (Human).